A 190-amino-acid chain; its full sequence is Elongation factor P-like protein (190 aa).

It belongs to the elongation factor P family.

In Yersinia pestis bv. Antiqua (strain Antiqua), this protein is Elongation factor P-like protein.